Reading from the N-terminus, the 340-residue chain is Methionine import ATP-binding protein MetN (340 aa).

Residues 8–246 (ISVKNLNKEI…PYSSITEELF (239 aa)) form the ABC transporter domain. 40-47 (GHSGSGKS) provides a ligand contact to ATP.

The protein belongs to the ABC transporter superfamily. Methionine importer (TC 3.A.1.24) family. The complex is composed of two ATP-binding proteins (MetN), two transmembrane proteins (MetI) and a solute-binding protein (MetQ).

The protein localises to the cell inner membrane. The enzyme catalyses L-methionine(out) + ATP + H2O = L-methionine(in) + ADP + phosphate + H(+). It carries out the reaction D-methionine(out) + ATP + H2O = D-methionine(in) + ADP + phosphate + H(+). Its function is as follows. Part of the ABC transporter complex MetNIQ involved in methionine import. Responsible for energy coupling to the transport system. The protein is Methionine import ATP-binding protein MetN of Chlamydia felis (strain Fe/C-56) (Chlamydophila felis).